Consider the following 234-residue polypeptide: Endonuclease V (234 aa).

Residues Asp-36 and Asp-104 each contribute to the Mg(2+) site.

The protein belongs to the endonuclease V family. The cofactor is Mg(2+).

It is found in the cytoplasm. It catalyses the reaction Endonucleolytic cleavage at apurinic or apyrimidinic sites to products with a 5'-phosphate.. DNA repair enzyme involved in the repair of deaminated bases. Selectively cleaves double-stranded DNA at the second phosphodiester bond 3' to a deoxyinosine leaving behind the intact lesion on the nicked DNA. This is Endonuclease V from Yersinia enterocolitica serotype O:8 / biotype 1B (strain NCTC 13174 / 8081).